A 328-amino-acid polypeptide reads, in one-letter code: Gonadotropin-releasing hormone receptor (328 aa).

Residues 1 to 38 (MANSASPEQNQNHCSASNSSIPLTQANLPTLTLSGKIR) are Extracellular-facing. The N-linked (GlcNAc...) asparagine glycan is linked to Asn-18. A helical transmembrane segment spans residues 39-59 (VTVTFFLFLLSTTFNASFLLK). Residues 60-84 (LHKWTQKKENGKKLSKMKVLLKHLT) lie on the Cytoplasmic side of the membrane. Residues 85–105 (LANLLETLIVMPLDGMWNITV) traverse the membrane as a helical segment. At 106–115 (QWYAGELLCK) the chain is on the extracellular side. Cys-114 and Cys-196 are disulfide-bonded. The helical transmembrane segment at 116-136 (VLSYLKLFSMYAPAFMMVVIS) threads the bilayer. At 137 to 157 (LDRSLAITRPLAVKSNSKLGR) the chain is on the cytoplasmic side. A helical transmembrane segment spans residues 158–178 (SMIGLAWLLSSIFAGPQLYIF). Residues 179–208 (RMIHLADSSGQTEGFSQCVTHCSFPQWWHQ) are Extracellular-facing. A helical membrane pass occupies residues 209 to 229 (AFYNFFTFSCLFIIPLLFMLI). Residues 230-271 (CNAKIIFTLTRVLHQDPHKLQLNQSKNNIPRARLRTLKMTVA) are Cytoplasmic-facing. Residues 272–292 (FATSFTVCWTPYYVLGIWYWF) traverse the membrane as a helical segment. At 293 to 306 (DPEMLNRVSDPVNH) the chain is on the extracellular side. The chain crosses the membrane as a helical span at residues 307–327 (FFFLFALLNPCFDPLIYGYFS). Leu-328 is a topological domain (cytoplasmic).

The protein belongs to the G-protein coupled receptor 1 family.

It is found in the cell membrane. Functionally, receptor for gonadotropin releasing hormone (GnRH) that mediates the action of GnRH to stimulate the secretion of the gonadotropic hormones luteinizing hormone (LH) and follicle-stimulating hormone (FSH). This receptor mediates its action by association with G-proteins that activate a phosphatidylinositol-calcium second messenger system. In Equus caballus (Horse), this protein is Gonadotropin-releasing hormone receptor (GNRHR).